The chain runs to 508 residues: Cytochrome P450 monooxygenase dmxR5 (508 aa).

Residues 24–44 (LTLGLGAILVVLMSFLAFLSY) traverse the membrane as a helical segment. 2 N-linked (GlcNAc...) asparagine glycosylation sites follow: Asn387 and Asn405. Residue Cys451 participates in heme binding. Residue Asn462 is glycosylated (N-linked (GlcNAc...) asparagine). The disordered stretch occupies residues 481–508 (EHKKSTQESGHGVPLPSKLSKFSPREEN).

Belongs to the cytochrome P450 family. Heme serves as cofactor.

Its subcellular location is the membrane. It participates in secondary metabolite biosynthesis. Functionally, cytochrome P450 monooxygenase; part of the gene cluster that mediates the biosynthesis of the dimeric xanthones cryptosporioptides. The pathway begins with the synthesis of atrochrysone thioester by the polyketide synthase dmx-nrPKS. The atrochrysone carboxyl ACP thioesterase dmxR1 then breaks the thioester bond and releases the atrochrysone carboxylic acid from dmx-nrPKS. Atrochrysone carboxylic acid is decarboxylated by the decarboxylase dmxR15, and oxidized by the anthrone oxygenase dmxR16 to yield emodin. Emodin is then reduced to emodin hydroquinone by the oxidoreductase dmxR7. A-ring reduction by the short chain dehydrogenase dmxR18, dehydration by the scytalone dehydratase-like protein dmxR17 and probable spontaneous re-oxidation, results in overall deoxygenation to chrysophanol. Baeyer-Villiger oxidation by the Baeyer-Villiger monooxygenase (BVMO) dmxR6 then yields monodictylactone in equilibrium with monodictyphenone. In the case of the cryptosporioptides biosynthesis, monodictylactone is reduced at C-12 to an alcohol (by the short chain dehydrogenases dmxR12 or dmxR8) and hydroxylated at C-5 by dmxR9, yielding the electron-rich aromatic which could eliminate H(2)O to form the ortho-quinonemethide, followed by tautomerisation to paraquinone and complete the formal reduction to produce the 10-methylgroup. Conjugate addition of C-4a-OH to the resulting paraquinone by the monooxygenase dmxR10 then gives cyclohexadienone, which is then reduced at C-5 by the short chain dehydrogenase dmxR3 to give the dihydroxanthone. The 6,7-epoxide in the cryptosporioptides could be introduced by the cytochrome P450 monooxygenase dmxL3. The highly reducing PKS dmxL2 manufactures butyrate, which is further carboxylated by dmxL1 to form ethylmalonate. It is not yet clear whether the carboxylation occurs while the butyrate is attached to the ACP of dmxL2, but this unusual fungal metabolite could then be esterified to O-5 by the O-acetyltransferase dmxR13. Finally, dimerization performed by dmxR5 gives the observed dimers cryptosporioptides A, B and C as the final products of the pathway. This is Cytochrome P450 monooxygenase dmxR5 from Cryptosporiopsis sp. (strain 8999).